We begin with the raw amino-acid sequence, 159 residues long: Small ribosomal subunit protein uS7 (159 aa).

The protein belongs to the universal ribosomal protein uS7 family. As to quaternary structure, part of the 30S ribosomal subunit. Contacts proteins S9 and S11.

One of the primary rRNA binding proteins, it binds directly to 16S rRNA where it nucleates assembly of the head domain of the 30S subunit. Is located at the subunit interface close to the decoding center, probably blocks exit of the E-site tRNA. The protein is Small ribosomal subunit protein uS7 of Wolbachia pipientis wMel.